The following is a 470-amino-acid chain: ESX-4 secretion system ATPase EccB4 (470 aa).

A helical membrane pass occupies residues 44 to 64; that stretch reads LALGCVLAIVAAMGCAFVALL.

Belongs to the EccB family. Part of the ESX-4 / type VII secretion system (T7SS), which is composed of cytosolic and membrane components.

Its subcellular location is the cell membrane. Its function is as follows. An ATPase. This chain is ESX-4 secretion system ATPase EccB4 (eccB4), found in Mycobacterium tuberculosis (strain CDC 1551 / Oshkosh).